Reading from the N-terminus, the 798-residue chain is Vacuolar protein sorting-associated protein 53 homolog (798 aa).

This sequence belongs to the VPS53 family. In terms of assembly, component of the Golgi-associated retrograde protein (GARP) complex, also called VFT (VPS fifty-three) complex, composed of vps-51, vps-52, vps-53 and vps-54. Within the complex interacts with vps-51, vps-52 and vps-54. In terms of tissue distribution, ubiquitously expressed, with particularly strong expression in neuronal cells. Specifically expressed in head and tail neurons and in the pharynx and ventral cord motor neurons.

The protein localises to the golgi apparatus. The protein resides in the trans-Golgi network membrane. Its subcellular location is the endosome membrane. It localises to the perikaryon. It is found in the cytoplasm. The protein localises to the perinuclear region. Acts as a component of the GARP complex that is involved in retrograde transport from early and late endosomes to the trans-Golgi network (TGN). The GARP complex facilitates tethering as well as SNARE complex assembly at the Golgi. Plays a role in the trafficking of cargo to dense-core vesicles, probably through association with the EARP-interacting protein eipr-1. Important for neuronal function. The polypeptide is Vacuolar protein sorting-associated protein 53 homolog (Caenorhabditis elegans).